The chain runs to 468 residues: Aldehyde dehydrogenase family 3 member B1 (468 aa).

M1 is subject to N-acetylmethionine. 188 to 193 (GNTYVG) contacts NAD(+). Residues E210 and C244 contribute to the active site. Residues C462 and C463 are each lipidated (S-palmitoyl cysteine). C465 is modified (cysteine methyl ester). C465 carries S-geranylgeranyl cysteine lipidation. Residues 466–468 (TLL) constitute a propeptide, removed in mature form.

It belongs to the aldehyde dehydrogenase family. In terms of processing, dually lipidated in the C-terminus; prenylation occurs prior to, and is a prerequisite for palmitoylation. It is also required for activity towards long-chain substrates.

It localises to the cell membrane. The catalysed reaction is an aldehyde + NAD(+) + H2O = a carboxylate + NADH + 2 H(+). The enzyme catalyses a long-chain fatty aldehyde + NAD(+) + H2O = a long-chain fatty acid + NADH + 2 H(+). It carries out the reaction a medium-chain fatty aldehyde + NAD(+) + H2O = a medium-chain fatty acid + NADH + 2 H(+). It catalyses the reaction octanal + NAD(+) + H2O = octanoate + NADH + 2 H(+). The catalysed reaction is nonanal + NAD(+) + H2O = nonanoate + NADH + 2 H(+). The enzyme catalyses hexadecanoate + NADH + 2 H(+) = hexadecanal + NAD(+) + H2O. It carries out the reaction (2E)-octenal + NAD(+) + H2O = (2E)-octenoate + NADH + 2 H(+). It catalyses the reaction (E)-non-2-enal + NAD(+) + H2O = (E)-non-2-enoate + NADH + 2 H(+). The catalysed reaction is (E)-4-hydroxynon-2-enal + NAD(+) + H2O = (E)-4-hydroxynon-2-enoate + NADH + 2 H(+). The enzyme catalyses (2E)-hexadecenal + NAD(+) + H2O = (E)-hexadec-2-enoate + NADH + 2 H(+). It carries out the reaction benzaldehyde + NAD(+) + H2O = benzoate + NADH + 2 H(+). It catalyses the reaction an aldehyde + NADP(+) + H2O = a carboxylate + NADPH + 2 H(+). The catalysed reaction is a medium-chain fatty aldehyde + NADP(+) + H2O = a medium-chain fatty acid + NADPH + 2 H(+). The enzyme catalyses hexanal + NADP(+) + H2O = hexanoate + NADPH + 2 H(+). It carries out the reaction octanal + NADP(+) + H2O = octanoate + NADPH + 2 H(+). It catalyses the reaction nonanal + NADP(+) + H2O = nonanoate + NADPH + 2 H(+). The catalysed reaction is (2E)-octenal + NADP(+) + H2O = (2E)-octenoate + NADPH + 2 H(+). The enzyme catalyses (E)-non-2-enal + NADP(+) + H2O = (E)-non-2-enoate + NADPH + 2 H(+). It carries out the reaction (E)-4-hydroxynon-2-enal + NADP(+) + H2O = (E)-4-hydroxynon-2-enoate + NADPH + 2 H(+). It catalyses the reaction benzaldehyde + NADP(+) + H2O = benzoate + NADPH + 2 H(+). It functions in the pathway alcohol metabolism; ethanol degradation; acetate from ethanol: step 2/2. Its function is as follows. Oxidizes medium and long chain saturated and unsaturated fatty aldehydes generated in the plasma membrane into non-toxic fatty acids. May have a protective role against the cytotoxicity induced by lipid peroxidation. Short-chain fatty aldehydes are not good substrates. Can use both NADP(+) and NAD(+) as electron acceptor in vitro, however in vivo preference will depend on their tissue levels. Low activity towards acetaldehyde and 3,4-dihydroxyphenylacetaldehyde. Able to metabolize aromatic aldehydes such as benzaldehyde to their acid form. This is Aldehyde dehydrogenase family 3 member B1 (Aldh3b1) from Rattus norvegicus (Rat).